We begin with the raw amino-acid sequence, 285 residues long: N(G),N(G)-dimethylarginine dimethylaminohydrolase 1 (285 aa).

Ala2 carries the N-acetylalanine modification. Leu30 lines the substrate pocket. The residue at position 33 (Ser33) is a Phosphoserine. Positions 73, 78, 79, 98, and 145 each coordinate substrate. Catalysis depends on His173, which acts as the Proton donor. S-nitrosocysteine is present on Cys222. Val268 is a binding site for substrate. Position 274 is an S-nitrosocysteine (Cys274). Catalysis depends on Cys274, which acts as the Nucleophile. Cys274 lines the Zn(2+) pocket.

The protein belongs to the DDAH family. As to quaternary structure, monomer. Detected in skeletal muscle, lung, heart, liver, kidney and brain (at protein level).

The enzyme catalyses N(omega),N(omega)-dimethyl-L-arginine + H2O = dimethylamine + L-citrulline. The catalysed reaction is N(omega)-methyl-L-arginine + H2O = L-citrulline + methylamine. Inhibited by zinc ions. In terms of biological role, hydrolyzes N(G),N(G)-dimethyl-L-arginine (ADMA) and N(G)-monomethyl-L-arginine (MMA) which act as inhibitors of NOS. Has therefore a role in the regulation of nitric oxide generation. In Mus musculus (Mouse), this protein is N(G),N(G)-dimethylarginine dimethylaminohydrolase 1 (Ddah1).